The sequence spans 345 residues: Probable glucan endo-1,3-beta-glucosidase BG4 (345 aa).

The signal sequence occupies residues 1-22; the sequence is MLYSPKKLFLFFLSCIVLYVNS. Residues Asn23 and Asn119 are each glycosylated (N-linked (GlcNAc...) asparagine). Glu128 serves as the catalytic Proton donor. Glu267 acts as the Nucleophile in catalysis. N-linked (GlcNAc...) asparagine glycosylation is found at Asn277 and Asn306.

It belongs to the glycosyl hydrolase 17 family.

The protein resides in the secreted. The enzyme catalyses Hydrolysis of (1-&gt;3)-beta-D-glucosidic linkages in (1-&gt;3)-beta-D-glucans.. May play a role in plant defense against pathogens. The sequence is that of Probable glucan endo-1,3-beta-glucosidase BG4 from Arabidopsis thaliana (Mouse-ear cress).